Here is a 118-residue protein sequence, read N- to C-terminus: Large ribosomal subunit protein bL19 (118 aa).

Belongs to the bacterial ribosomal protein bL19 family.

In terms of biological role, this protein is located at the 30S-50S ribosomal subunit interface and may play a role in the structure and function of the aminoacyl-tRNA binding site. The protein is Large ribosomal subunit protein bL19 of Saccharophagus degradans (strain 2-40 / ATCC 43961 / DSM 17024).